Reading from the N-terminus, the 575-residue chain is Acyloxyacyl hydrolase (575 aa).

An N-terminal signal peptide occupies residues 1–23 (MQSPWKILTVAPLFLLLSLQSSA). Positions 24–34 (SPANDDQSRPS) are excised as a propeptide. The 82-residue stretch at 37-118 (NGHTCVGCVL…HTLEFCKQNT (82 aa)) folds into the Saposin B-type domain. An important for enzyme activity, localization to cytoplasmic vesicles, and protein stability region spans residues 38-70 (GHTCVGCVLVVSVIEQLAQVHNSTVQASMERLC). Intrachain disulfides connect cysteine 41/cysteine 114, cysteine 44/cysteine 108, cysteine 70/cysteine 83, cysteine 123/cysteine 453, cysteine 160/cysteine 169, cysteine 206/cysteine 230, cysteine 249/cysteine 329, and cysteine 376/cysteine 459. Residue asparagine 59 is glycosylated (N-linked (GlcNAc...) asparagine). The lipopolysaccharide binding stretch occupies residues 173-177 (KLAME). 15 residues coordinate Ca(2+): aspartate 184, aspartate 186, aspartate 188, tyrosine 190, aspartate 205, asparagine 207, aspartate 208, aspartate 210, valine 213, aspartate 223, aspartate 227, asparagine 229, asparagine 231, isoleucine 233, and glutamate 245. N-linked (GlcNAc...) asparagine glycosylation occurs at asparagine 207. Residue serine 263 is part of the active site. Residues asparagine 409 and asparagine 466 are each glycosylated (N-linked (GlcNAc...) asparagine).

In terms of assembly, heterodimer of the large and small subunits; disulfide-linked. The cofactor is Ca(2+). Post-translationally, cleaved into a large and a small subunit. In terms of processing, the small subunit is N-glycosylated.

It is found in the secreted. The protein localises to the cytoplasmic vesicle. The enzyme catalyses a 3-(acyloxy)acyl derivative of bacterial toxin + H2O = a 3-hydroxyacyl derivative of bacterial toxin + a fatty acid + H(+). Inhibited by EDTA. Removes the secondary (acyloxyacyl-linked) fatty acyl chains from the lipid A region of bacterial lipopolysaccharides. By breaking down LPS, terminates the host response to bacterial infection and prevents prolonged and damaging inflammatory responses. In peritoneal macrophages, seems to be important for recovery from a state of immune tolerance following infection by Gram-negative bacteria. The chain is Acyloxyacyl hydrolase from Homo sapiens (Human).